We begin with the raw amino-acid sequence, 203 residues long: Dephospho-CoA kinase (203 aa).

Residues 6–203 (RLGITGGIAC…SLLGRGGKGG (198 aa)) form the DPCK domain. 14-19 (ACGKSV) contributes to the ATP binding site.

This sequence belongs to the CoaE family.

Its subcellular location is the cytoplasm. It carries out the reaction 3'-dephospho-CoA + ATP = ADP + CoA + H(+). It functions in the pathway cofactor biosynthesis; coenzyme A biosynthesis; CoA from (R)-pantothenate: step 5/5. Functionally, catalyzes the phosphorylation of the 3'-hydroxyl group of dephosphocoenzyme A to form coenzyme A. This Thermosynechococcus vestitus (strain NIES-2133 / IAM M-273 / BP-1) protein is Dephospho-CoA kinase.